Here is a 282-residue protein sequence, read N- to C-terminus: Energy-coupling factor transporter ATP-binding protein EcfA1 (282 aa).

The ABC transporter domain occupies 6 to 243 (VTVKHLSFTY…EVLIKSAGLE (238 aa)). 40–47 (GHNGSGKS) is an ATP binding site.

It belongs to the ABC transporter superfamily. Energy-coupling factor EcfA family. In terms of assembly, forms a stable energy-coupling factor (ECF) transporter complex composed of 2 membrane-embedded substrate-binding proteins (S component), 2 ATP-binding proteins (A component) and 2 transmembrane proteins (T component).

Its subcellular location is the cell membrane. In terms of biological role, ATP-binding (A) component of a common energy-coupling factor (ECF) ABC-transporter complex. Unlike classic ABC transporters this ECF transporter provides the energy necessary to transport a number of different substrates. This chain is Energy-coupling factor transporter ATP-binding protein EcfA1, found in Lactobacillus johnsonii (strain CNCM I-12250 / La1 / NCC 533).